A 597-amino-acid chain; its full sequence is Putative diflavin flavoprotein A 3 (597 aa).

Positions 59–254 are zinc metallo-hydrolase; the sequence is QRGTTANSYL…YPAQTYAPSH (196 aa). The region spanning 283 to 421 is the Flavodoxin-like domain; the sequence is VALIYASAYG…MCEEAGTDFA (139 aa). Residues 449–597 form a flavodoxin-reductase-like region; that stretch reads LGRLVGSLCV…VHHRKSGDHY (149 aa).

This sequence in the N-terminal section; belongs to the zinc metallo-hydrolase group 3 family. The protein in the C-terminal section; belongs to the flavodoxin reductase family. Fe cation serves as cofactor.

Its function is as follows. Mediates electron transfer from NADH to oxygen, reducing it to water. This modular protein has 3 redox cofactors, in other organisms the same activity requires 2 or 3 proteins. The polypeptide is Putative diflavin flavoprotein A 3 (dfa3) (Synechocystis sp. (strain ATCC 27184 / PCC 6803 / Kazusa)).